The chain runs to 102 residues: MGKAGNIEHVEERVESEVMPPSMYKVILNNDDYTPMDFVIEVLQLFFKKTEEQATDIMLAIHHQGKGICGIFPFGIAETKVAQVNQFARQNQHPLLCSLEKA.

The protein belongs to the ClpS family. Binds to the N-terminal domain of the chaperone ClpA.

Involved in the modulation of the specificity of the ClpAP-mediated ATP-dependent protein degradation. The sequence is that of ATP-dependent Clp protease adapter protein ClpS from Shewanella woodyi (strain ATCC 51908 / MS32).